The following is a 541-amino-acid chain: Chaperonin GroEL 2 (541 aa).

Residues threonine 29 to proline 32, aspartate 86 to threonine 90, glycine 413, asparagine 478 to alanine 480, and aspartate 494 each bind ATP.

It belongs to the chaperonin (HSP60) family. As to quaternary structure, forms a cylinder of 14 subunits composed of two heptameric rings stacked back-to-back. Interacts with the co-chaperonin GroES.

It is found in the cytoplasm. It catalyses the reaction ATP + H2O + a folded polypeptide = ADP + phosphate + an unfolded polypeptide.. Its function is as follows. Together with its co-chaperonin GroES, plays an essential role in assisting protein folding. The GroEL-GroES system forms a nano-cage that allows encapsulation of the non-native substrate proteins and provides a physical environment optimized to promote and accelerate protein folding. This chain is Chaperonin GroEL 2, found in Corynebacterium jeikeium (strain K411).